A 385-amino-acid chain; its full sequence is GTP cyclohydrolase-2 (385 aa).

Residues 1-189 (MYADAPSDSA…RDIADYRVHV (189 aa)) form a DHBP synthase-like region. The segment at 190–385 (VRTLRRVAEA…TKAERSGHMF (196 aa)) is GTP cyclohydrolase II. 240 to 244 (RLHSE) contributes to the GTP binding site. Positions 245, 256, and 258 each coordinate Zn(2+). Residues Gln-261, 283-285 (EGR), and Thr-305 contribute to the GTP site. Asp-317 serves as the catalytic Proton acceptor. Arg-319 (nucleophile) is an active-site residue. GTP-binding residues include Thr-340 and Lys-345.

In the N-terminal section; belongs to the DHBP synthase family. The protein in the C-terminal section; belongs to the GTP cyclohydrolase II family. Zn(2+) is required as a cofactor.

It catalyses the reaction GTP + 4 H2O = 2,5-diamino-6-hydroxy-4-(5-phosphoribosylamino)-pyrimidine + formate + 2 phosphate + 3 H(+). It participates in cofactor biosynthesis; riboflavin biosynthesis; 5-amino-6-(D-ribitylamino)uracil from GTP: step 1/4. Functionally, catalyzes the conversion of GTP to 2,5-diamino-6-ribosylamino-4(3H)-pyrimidinone 5'-phosphate (DARP), formate and pyrophosphate. This Azospirillum brasilense protein is GTP cyclohydrolase-2 (ribA).